Here is a 165-residue protein sequence, read N- to C-terminus: Phosphopantetheine adenylyltransferase (165 aa).

Threonine 11 contributes to the substrate binding site. ATP-binding positions include 11 to 12 and histidine 19; that span reads TF. Residues lysine 43, threonine 79, and arginine 93 each contribute to the substrate site. ATP contacts are provided by residues glutamate 104 and 128–134; that span reads LEPLNST.

It belongs to the bacterial CoaD family. Homohexamer. The cofactor is Mg(2+).

The protein resides in the cytoplasm. The catalysed reaction is (R)-4'-phosphopantetheine + ATP + H(+) = 3'-dephospho-CoA + diphosphate. It functions in the pathway cofactor biosynthesis; coenzyme A biosynthesis; CoA from (R)-pantothenate: step 4/5. Functionally, reversibly transfers an adenylyl group from ATP to 4'-phosphopantetheine, yielding dephospho-CoA (dPCoA) and pyrophosphate. The polypeptide is Phosphopantetheine adenylyltransferase (Lactococcus lactis subsp. lactis (strain IL1403) (Streptococcus lactis)).